The chain runs to 1216 residues: Regulator of telomere elongation helicase 1 (1216 aa).

The 289-residue stretch at 7 to 295 (KGVTVDFPFQ…TKVAQQAELH (289 aa)) folds into the Helicase ATP-binding domain. 42–49 (SPTGTGKT) contacts ATP. 4 residues coordinate [4Fe-4S] cluster: Cys-144, Cys-162, Cys-171, and Cys-206. A Nuclear localization signal motif is present at residues 150–166 (KKQESNHMQVHLCRRKV). Residues 249–252 (DEAH) carry the DEAH box motif. Positions 874–880 (QRGRRRK) match the Nuclear localization signal motif. Disordered stretches follow at residues 978 to 1018 (GCSS…ATRQ) and 1140 to 1172 (GPGTQAPGPQEGGPAMPSDPVCEAPSPGPRKTQ). The PIP-box motif lies at 1172–1179 (QSKISSFL).

Belongs to the helicase family. RAD3/XPD subfamily. In terms of assembly, interacts with TERF1. Interacts (via PIP-box) with PCNA; the interaction is direct and essential for suppressing telomere fragility. Interacts with MMS19; the interaction mediates the association of RTEL1 with the cytosolic iron-sulfur protein assembly (CIA) complex. In terms of tissue distribution, highly expressed in adult testis, liver and ovary.

It is found in the nucleus. The enzyme catalyses ATP + H2O = ADP + phosphate + H(+). A probable ATP-dependent DNA helicase implicated in telomere-length regulation, DNA repair and the maintenance of genomic stability. Acts as an anti-recombinase to counteract toxic recombination and limit crossover during meiosis. Regulates meiotic recombination and crossover homeostasis by physically dissociating strand invasion events and thereby promotes noncrossover repair by meiotic synthesis dependent strand annealing (SDSA) as well as disassembly of D loop recombination intermediates. Also disassembles T loops and prevents telomere fragility by counteracting telomeric G4-DNA structures, which together ensure the dynamics and stability of the telomere. The chain is Regulator of telomere elongation helicase 1 from Bos taurus (Bovine).